Reading from the N-terminus, the 504-residue chain is ATP synthase subunit alpha (504 aa).

ATP is bound at residue 170–177 (GDRQTGKT).

This sequence belongs to the ATPase alpha/beta chains family. As to quaternary structure, F-type ATPases have 2 components, CF(1) - the catalytic core - and CF(0) - the membrane proton channel. CF(1) has five subunits: alpha(3), beta(3), gamma(1), delta(1), epsilon(1). CF(0) has four main subunits: a(1), b(1), b'(1) and c(9-12).

It is found in the cellular thylakoid membrane. It carries out the reaction ATP + H2O + 4 H(+)(in) = ADP + phosphate + 5 H(+)(out). Produces ATP from ADP in the presence of a proton gradient across the membrane. The alpha chain is a regulatory subunit. This chain is ATP synthase subunit alpha, found in Prochlorococcus marinus (strain NATL1A).